The chain runs to 394 residues: MLGNLKPQAPDKILALMGEFRADPRQGKIDLGVGVYKDATGHTPIMRAVHAAEQRMLETETTKTYAGLSGEPEFQKAMGELILGDGLKSETTATLATVGGTGALRQALELARMANPDLRVFVSDPTWPNHVSIMNFMGLPVQTYRYFDAETRGVDFEGMKADLAAAKKGDMVLLHGCCHNPTGANLTLDQWAEIASILEKTGALPLIDLAYQGFGDGLEEDAAGTRLIASRIPEVLIAASCSKNFGIYRERTGCLLALCADAATRELAQGAMAFLNRQTYSFPPFHGAKIVSTVLTTPELRADWMAELEAVRSGMLRLREQLAGELRDLSGSDRFGFVAEHRGMFSRLGATPEQVKRIKEEFGIYMVGDSRINIAGLNDNTIPILARAIIEVGV.

Glycine 34, tyrosine 65, tryptophan 127, and asparagine 180 together coordinate substrate. At lysine 243 the chain carries N6-(pyridoxal phosphate)lysine. A substrate-binding site is contributed by arginine 371.

It belongs to the class-I pyridoxal-phosphate-dependent aminotransferase family. In terms of assembly, homodimer. Pyridoxal 5'-phosphate serves as cofactor.

The protein localises to the cytoplasm. It carries out the reaction an aromatic L-alpha-amino acid + 2-oxoglutarate = an aromatic oxo-acid + L-glutamate. Its function is as follows. Shows activities toward both dicarboxylic and aromatic substrates. This Paracoccus denitrificans protein is Aromatic-amino-acid aminotransferase (tyrB).